Reading from the N-terminus, the 297-residue chain is Hydroxysqualene synthase (297 aa).

This sequence belongs to the phytoene/squalene synthase family. HpnC subfamily.

The catalysed reaction is presqualene diphosphate + H2O = hydroxysqualene + diphosphate. It functions in the pathway secondary metabolite biosynthesis; hopanoid biosynthesis. Involved in the biosynthesis of the hopanoid precursor squalene (SQ) from farnesyl diphosphate (FPP). Catalyzes the second step, the conversion of presqualene diphosphate (PSPP) to hydroxysqualene (HSQ). The polypeptide is Hydroxysqualene synthase (Zymomonas mobilis subsp. mobilis (strain ATCC 31821 / ZM4 / CP4)).